Here is a 588-residue protein sequence, read N- to C-terminus: Adenine deaminase (588 aa).

It belongs to the metallo-dependent hydrolases superfamily. Adenine deaminase family. Homodimer. Mn(2+) serves as cofactor.

It carries out the reaction adenine + H2O + H(+) = hypoxanthine + NH4(+). This Shigella flexneri protein is Adenine deaminase.